Consider the following 427-residue polypeptide: GTPase Obg (427 aa).

Residues 1–158 form the Obg domain; the sequence is MFVDKVKVYV…RDVILELKVL (158 aa). The interval 118–144 is disordered; sequence KGGRGGRGNTRFATPANPAPELSENGE. The 171-residue stretch at 159-329 folds into the OBG-type G domain; it reads ADAGLVGFPS…LLRAIMDTIE (171 aa). GTP is bound by residues 165–172, 190–194, 212–215, 282–285, and 310–312; these read GFPSVGKS, FTTIT, DLPG, NKMD, and SAL. Residues Ser172 and Thr192 each coordinate Mg(2+). One can recognise an OCT domain in the interval 349–427; that stretch reads KHDKEQDPFV…LLEFEFEFIE (79 aa).

The protein belongs to the TRAFAC class OBG-HflX-like GTPase superfamily. OBG GTPase family. Monomer. Mg(2+) serves as cofactor.

It localises to the cytoplasm. Its function is as follows. An essential GTPase which binds GTP, GDP and possibly (p)ppGpp with moderate affinity, with high nucleotide exchange rates and a fairly low GTP hydrolysis rate. Plays a role in control of the cell cycle, stress response, ribosome biogenesis and in those bacteria that undergo differentiation, in morphogenesis control. The chain is GTPase Obg from Halalkalibacterium halodurans (strain ATCC BAA-125 / DSM 18197 / FERM 7344 / JCM 9153 / C-125) (Bacillus halodurans).